We begin with the raw amino-acid sequence, 366 residues long: Anhydro-N-acetylmuramic acid kinase (366 aa).

10–17 (GTSMDGID) is an ATP binding site.

The protein belongs to the anhydro-N-acetylmuramic acid kinase family.

It catalyses the reaction 1,6-anhydro-N-acetyl-beta-muramate + ATP + H2O = N-acetyl-D-muramate 6-phosphate + ADP + H(+). It functions in the pathway amino-sugar metabolism; 1,6-anhydro-N-acetylmuramate degradation. Its pathway is cell wall biogenesis; peptidoglycan recycling. Its function is as follows. Catalyzes the specific phosphorylation of 1,6-anhydro-N-acetylmuramic acid (anhMurNAc) with the simultaneous cleavage of the 1,6-anhydro ring, generating MurNAc-6-P. Is required for the utilization of anhMurNAc either imported from the medium or derived from its own cell wall murein, and thus plays a role in cell wall recycling. This Legionella pneumophila (strain Lens) protein is Anhydro-N-acetylmuramic acid kinase.